Here is a 78-residue protein sequence, read N- to C-terminus: Small integral membrane protein 5 (78 aa).

The helical transmembrane segment at 32 to 52 threads the bilayer; it reads ILAFSVLVVFTATVVLLLLIA.

Its subcellular location is the membrane. The sequence is that of Small integral membrane protein 5 (SMIM5) from Bos taurus (Bovine).